Reading from the N-terminus, the 408-residue chain is 3-ketoacyl-CoA thiolase A, peroxisomal (408 aa).

Cys112 (acyl-thioester intermediate) is an active-site residue. Active-site proton acceptor residues include His366 and Cys394.

This sequence belongs to the thiolase-like superfamily. Thiolase family. As to quaternary structure, homodimer.

The protein localises to the peroxisome. It carries out the reaction an acyl-CoA + acetyl-CoA = a 3-oxoacyl-CoA + CoA. Its pathway is lipid metabolism; fatty acid metabolism. The protein is 3-ketoacyl-CoA thiolase A, peroxisomal of Candida tropicalis (Yeast).